Here is a 537-residue protein sequence, read N- to C-terminus: CTP synthase (537 aa).

The tract at residues 1–267 is amidoligase domain; the sequence is MAKFVFVTGG…ADIVLDKLGI (267 aa). A CTP-binding site is contributed by S13. S13 serves as a coordination point for UTP. 14–19 lines the ATP pocket; that stretch reads SLGKGI. Y54 contacts L-glutamine. An ATP-binding site is contributed by D71. The Mg(2+) site is built by D71 and E141. Residues 148-150, 188-193, and K224 contribute to the CTP site; these read DIE and KTKPTQ. Residues 188-193 and K224 contribute to the UTP site; that span reads KTKPTQ. The region spanning 292–534 is the Glutamine amidotransferase type-1 domain; the sequence is TIALVGKYVS…IGAARKYKES (243 aa). G354 is an L-glutamine binding site. C381 (nucleophile; for glutamine hydrolysis) is an active-site residue. Residues 382 to 385, E405, and R462 each bind L-glutamine; that span reads LGMQ. Catalysis depends on residues H507 and E509.

The protein belongs to the CTP synthase family. As to quaternary structure, homotetramer.

The enzyme catalyses UTP + L-glutamine + ATP + H2O = CTP + L-glutamate + ADP + phosphate + 2 H(+). The catalysed reaction is L-glutamine + H2O = L-glutamate + NH4(+). It catalyses the reaction UTP + NH4(+) + ATP = CTP + ADP + phosphate + 2 H(+). The protein operates within pyrimidine metabolism; CTP biosynthesis via de novo pathway; CTP from UDP: step 2/2. Allosterically activated by GTP, when glutamine is the substrate; GTP has no effect on the reaction when ammonia is the substrate. The allosteric effector GTP functions by stabilizing the protein conformation that binds the tetrahedral intermediate(s) formed during glutamine hydrolysis. Inhibited by the product CTP, via allosteric rather than competitive inhibition. In terms of biological role, catalyzes the ATP-dependent amination of UTP to CTP with either L-glutamine or ammonia as the source of nitrogen. Regulates intracellular CTP levels through interactions with the four ribonucleotide triphosphates. In Pelotomaculum thermopropionicum (strain DSM 13744 / JCM 10971 / SI), this protein is CTP synthase.